The primary structure comprises 190 residues: Elongation factor P 2 (190 aa).

The protein belongs to the elongation factor P family.

It localises to the cytoplasm. Its pathway is protein biosynthesis; polypeptide chain elongation. Functionally, involved in peptide bond synthesis. Stimulates efficient translation and peptide-bond synthesis on native or reconstituted 70S ribosomes in vitro. Probably functions indirectly by altering the affinity of the ribosome for aminoacyl-tRNA, thus increasing their reactivity as acceptors for peptidyl transferase. This is Elongation factor P 2 (efp2) from Chlamydia caviae (strain ATCC VR-813 / DSM 19441 / 03DC25 / GPIC) (Chlamydophila caviae).